The following is an 831-amino-acid chain: AMP deaminase (831 aa).

Disordered regions lie at residues Asn26–Pro45, Asn66–Asn110, and Asn130–Thr149. Residues Ser79 and Ser84 each carry the phosphoserine modification. Residues His319 and His321 each coordinate Zn(2+). Residues His321 and Lys390–Tyr395 contribute to the substrate site. Zn(2+) is bound at residue His587. Glu590 lines the substrate pocket. Catalysis depends on His609, which acts as the Proton acceptor. Asp664 is a Zn(2+) binding site. Substrate is bound at residue Asp665 to Gln668. Phosphoserine is present on residues Ser758, Ser776, Ser780, and Ser782.

Belongs to the metallo-dependent hydrolases superfamily. Adenosine and AMP deaminases family. In terms of assembly, homotetramer. It depends on Zn(2+) as a cofactor.

It localises to the cytoplasm. The catalysed reaction is AMP + H2O + H(+) = IMP + NH4(+). Its pathway is purine metabolism; IMP biosynthesis via salvage pathway; IMP from AMP: step 1/1. Functionally, AMP deaminase plays a critical role in energy metabolism. The sequence is that of AMP deaminase (ada1) from Schizosaccharomyces pombe (strain 972 / ATCC 24843) (Fission yeast).